The primary structure comprises 355 residues: MATPEEKAKALEAALGQIEKQFGKGAIMKLGETQKLDIEAISTGSLSLDVALGIGGLPMGRIVEIFGPESSGKTTLTLSVIAQAQKAGKTCAFIDAEHALDPIYAAKLGVDVKELLISQPDNGEQALEICDALVRSGAVDVVIVDSVAALTPKAEIEGEMGDTHVGLQARLMSQALRKLTGQIKNSNCLVVFINQIRMKIGVVFGNPETTTGGNALKFYASVRLDIRRVGSIKNGDEVIGNETRVKVVKNKVAPPFRQVDFQILYGEGISRNGELIELGVKHKLVNKSGAWFSYEGEKIGQGKTNAMKWLAEHPEQAAILEQKLRSELLANPEKALLADLEAESESNISEVESDF.

67–74 (GPESSGKT) lines the ATP pocket.

This sequence belongs to the RecA family.

It is found in the cytoplasm. Its function is as follows. Can catalyze the hydrolysis of ATP in the presence of single-stranded DNA, the ATP-dependent uptake of single-stranded DNA by duplex DNA, and the ATP-dependent hybridization of homologous single-stranded DNAs. It interacts with LexA causing its activation and leading to its autocatalytic cleavage. In Histophilus somni (strain 2336) (Haemophilus somnus), this protein is Protein RecA.